Consider the following 142-residue polypeptide: Type II secretion system core protein G (142 aa).

Positions 1-8 (MQRRQQSG) are cleaved as a propeptide — leader sequence. The residue at position 9 (Phe9) is an N-methylphenylalanine. The helical transmembrane segment at 9–29 (FTLIEIMVVVVILGILAALVV) threads the bilayer. The interval 121–142 (SLGADGKEGGSDNDADIGNWDN) is disordered.

The protein belongs to the GSP G family. In terms of assembly, type II secretion system is composed of four main components: the outer membrane complex, the inner membrane complex, the cytoplasmic secretion ATPase and the periplasm-spanning pseudopilus. Forms homomultimers. Interacts with pseudopilin tip ternary complex made of XcpX, XcpU, XcpV and XcpW. Interacts with PilA. In terms of processing, cleaved by the prepilin peptidase. Post-translationally, methylated by prepilin peptidase at the amino group of the N-terminal phenylalanine once the leader sequence is cleaved.

The protein localises to the cell inner membrane. Functionally, core component of the type II secretion system required for the energy-dependent secretion of extracellular factors such as proteases and toxins from the periplasm. Pseudopilin (pilin-like) protein that polymerizes to form the pseudopilus. Further polymerization triggers pseudopilus growth. Type II pseudopilus confers increased bacterial adhesive capabilities. The polypeptide is Type II secretion system core protein G (xcpT) (Pseudomonas aeruginosa (strain ATCC 15692 / DSM 22644 / CIP 104116 / JCM 14847 / LMG 12228 / 1C / PRS 101 / PAO1)).